The primary structure comprises 134 residues: MAKASNNSAAQRVRKKVKKNVAEGVVHVHASFNNTIITITDRQGNALAWATSGGQGFKGSRKSTPFAAQVAAESAGRVAMEYGVKNLEVRIKGPGPGRESAVRALHGLGIKITAISDVTPVPHNGCRPPKRRRI.

It belongs to the universal ribosomal protein uS11 family. In terms of assembly, part of the 30S ribosomal subunit. Interacts with proteins S7 and S18. Binds to IF-3.

In terms of biological role, located on the platform of the 30S subunit, it bridges several disparate RNA helices of the 16S rRNA. Forms part of the Shine-Dalgarno cleft in the 70S ribosome. This is Small ribosomal subunit protein uS11 from Paraburkholderia xenovorans (strain LB400).